We begin with the raw amino-acid sequence, 475 residues long: FAD-dependent monooxygenase penE (475 aa).

FAD contacts are provided by glutamate 35, glycine 49, and arginine 108. Residue tyrosine 216 is part of the active site. Aspartate 308 and alanine 321 together coordinate FAD. An N-linked (GlcNAc...) asparagine glycan is attached at asparagine 437. The helical transmembrane segment at 446 to 466 (WGSIWLSPVILCLFCMLFLWP) threads the bilayer.

This sequence belongs to the paxM FAD-dependent monooxygenase family. FAD is required as a cofactor.

The protein localises to the membrane. It carries out the reaction [(1'E)-3'-hydroxy-3',7'-dimethylocta-1',6'-dien-1'-yl]-quinolinone B + NADPH + O2 + H(+) = [(1'E)-5'-(3',3'-dimethyloxiran-2'-yl)-3'-hydroxy-3'-methylpent-1'-en-1'-yl]-quinolinone B + NADP(+) + H2O. Its pathway is secondary metabolite biosynthesis. It functions in the pathway alkaloid biosynthesis. The protein operates within mycotoxin biosynthesis. Functionally, FAD-dependent monooxygenase; part of the gene cluster that mediates the biosynthesis of penigequinolones, potent insecticidal alkaloids that contain a highly modified 10-carbon prenyl group. The first stage is catalyzed by the nonribosomal peptide synthetase penN that condenses anthranilic acid and O-methyl-L-tyrosine to produce 4'-methoxycyclopeptin. 4'-methoxycyclopeptin is then converted to 4'-methoxydehydrocyclopeptin by the ketoglutarate-dependent dioxygenase penM through dehydrogenation to form a double bond between C-alpha and C-beta of the O-methyltyrosine side chain. PenM also converts its first product methoxydehydrocyclopeptin to 4'-methoxycyclopenin. The following conversion of 4'methoxycyclopenin into 4'-methoxyviridicatin is catalyzed by the cyclopenase penL. 4'-methoxyviridicatin is the precursor of quinolone natural products, and is further converted to quinolinone B. The prenyltransferase penI then catalyzes the canonical Friedel-Crafts alkylation of quinolinone B with dimethylallyl cation to yield dimethylallyl quinolone, which is subjected to FAD-dependent dehydrogenation by the FAD-linked oxidoreductase penH to yield conjugated aryl diene. The delta(3') double bond then serves as the site of the second alkylation with DMAPP catalyzed by the prenyltransferase penG to yield a carbenium ion intermediate, which can be attacked by H(2)O to yield a styrenyl quinolone containing a C3'-hydroxyprenyl chain, or undergo cyclization to yield yaequinolones J1 and J2. The conversion of the styrenyl quinolone into the tetrahydrofuran-containing yaequinolone C is performed by the FAD-dependent monooxygenase penE and involves epoxidation of the terminal C7'-C8' olefin, followed by epoxide ring opening initiated by the C3' hydroxyl group. The predicted cysteine hydrolase penJ acts as an epoxide hydrolase that enhances the rate of the 5-exo-tet cyclization step, increasing the yield of yaequinolone C. PenF catalyzes the cationic rearrangement of the epoxide formed by penE (before ring opening to produce yaequinolone C) into yaequinolone D. Finally, the short-chain dehydrogenase/reductase (SDR)-like reductase penD, catalyzes both the dehydration of yaequinolone D and the reduction of the resulting oxonium to yield penigequinolone. This is FAD-dependent monooxygenase penE from Penicillium thymicola.